Consider the following 1236-residue polypeptide: Structural polyprotein (1236 aa).

The interval 1-36 is necessary for nucleocapsid assembly and virus assembly; sequence MFPYPQLNFPPVYPTNPMAYRDPNPPRCRWRPFRPP. Positions 37 to 70 are host transcription inhibition; the sequence is LAAQIEDLRRSIANLTFKQRSPNPPPGPPPKKKK. The short motif at 44 to 51 is the Supraphysiological nuclear export signal element; that stretch reads LRRSIANL. Positions 44–103 are disordered; it reads LRRSIANLTFKQRSPNPPPGPPPKKKKSAPKPKPTQPKKKKQQAKKTKRKPKPGKRQRMC. The segment covering 66-102 has biased composition (basic residues); that stretch reads PKKKKSAPKPKPTQPKKKKQQAKKTKRKPKPGKRQRM. A Nuclear localization signal motif is present at residues 67–70; that stretch reads KKKK. Residues 83–111 are binding to the viral RNA; it reads KKQQAKKTKRKPKPGKRQRMCMKLESDKT. Residues 96–110 form a ribosome-binding region; that stretch reads PGKRQRMCMKLESDK. A Phosphoserine modification is found at S108. Positions 110–259 constitute a Peptidase S3 domain; sequence KTFPIMLNGQ…KDTPEGSEPW (150 aa). Residue T111 is modified to Phosphothreonine. H136 (charge relay system) is an active-site residue. An interaction with spike glycoprotein E2 region spans residues 152–157; the sequence is KKASMY. Active-site charge relay system residues include D158 and S210. Positions 244–248 are interaction with spike glycoprotein E2; sequence QKGVT. Residues 260 to 271 form a functions as an uncleaved signal peptide for the precursor of protein E3/E2 region; it reads SLVTALCVLSNV. Topologically, residues 260 to 687 are extracellular; it reads SLVTALCVLS…YYHRHPVYTV (428 aa). Intrachain disulfides connect C266/C275, C335/C443, C338/C344, C410/C424, C471/C585, C520/C545, and C522/C539. Residue N270 is glycosylated (N-linked (GlcNAc...) asparagine; by host). Residue N515 is glycosylated (N-linked (GlcNAc...) asparagine; by host). N637 carries an N-linked (GlcNAc...) asparagine; by host glycan. The helical transmembrane segment at 688–708 threads the bilayer; it reads IVLCGVALAILVGTASSAACI. Over 709–742 the chain is Cytoplasmic; sequence AKARRDCLTPYALAPNATVPTALAVLCCIRPTNA. An interaction with the capsid protein region spans residues 710-714; the sequence is KARRD. 3 S-palmitoyl cysteine; by host lipidation sites follow: C715, C735, and C736. A disulfide bridge connects residues C715 and C736. The segment at 717 to 737 is transient transmembrane before p62-6K protein processing; it reads TPYALAPNATVPTALAVLCCI. The Extracellular segment spans residues 743-767; sequence ETFGETLNHLWFNNQPFLWAQLCIP. Transmembrane regions (helical) follow at residues 768-788 and 789-809; these read LAALVILFRCFSCCMPFLLVA and GVCLGKVDAFEHATTVPNVPG. Residues 810 to 1205 lie on the Extracellular side of the membrane; that stretch reads IPYKALVERA…QAAVSKTSWN (396 aa). 4 cysteine pairs are disulfide-bonded: C846-C911, C859-C891, C860-C893, and C865-C875. The interval 881-898 is E1 fusion peptide loop; the sequence is VYPFMWGGAQCFCDSENT. N-linked (GlcNAc...) asparagine; by host glycosylation is found at N936, N1042, and N1067. 4 disulfides stabilise this stretch: C1056/C1068, C1098/C1173, C1103/C1177, and C1125/C1167. Residues 1206–1226 form a helical membrane-spanning segment; the sequence is WLLALFGGASSLIVVGLIVLV. Residues 1227–1236 are Cytoplasmic-facing; the sequence is CSSMLINTRR.

In terms of assembly, homodimer. Homomultimer. Interacts with host karyopherin KPNA4; this interaction allows the nuclear import of the viral capsid protein. Interacts with spike glycoprotein E2. Interacts with host IRAK1; the interaction leads to inhibition of IRAK1-dependent signaling. Part of a tetrameric complex composed of host CRM1, host importin alpha/beta dimer and the viral capsid; this complex blocks the receptor-mediated transport through the nuclear pore. Interacts with host phosphatase PPP1CA; this interaction dephosphorylates the capsid protein, which increases its ability to bind to the viral genome. The precursor of protein E3/E2 and E1 form a heterodimer shortly after synthesis. As to quaternary structure, interacts with spike glycoprotein E2. The precursor of protein E3/E2 and E1 form a heterodimer shortly after synthesis. Processing of the precursor of protein E3/E2 into E2 and E3 results in a heterodimer of the spike glycoproteins E2 and E1. Spike at virion surface are constituted of three E2-E1 heterodimers. After target cell attachment and endocytosis, E1 change conformation to form homotrimers. Interacts with 6K protein. In terms of assembly, interacts with spike glycoprotein E1. Processing of the precursor of protein E3/E2 into E2 and E3 results in a heterodimer of the spike glycoproteins E2 and E1. Spike at virion surface are constituted of a trimer of E2-E1 heterodimers. Interacts with 6K protein. The E2-E1 heterodimer interacts with host PCDH10 (via domain Cadherin 1); this interaction mediates viral entry to the host cell. Oligomer. Interacts with spike glycoprotein E1. Interacts with spike glycoprotein E2. In terms of processing, structural polyprotein: Specific enzymatic cleavages in vivo yield mature proteins. Capsid protein is auto-cleaved during polyprotein translation, unmasking a signal peptide at the N-terminus of the precursor of E3/E2. The remaining polyprotein is then targeted to the host endoplasmic reticulum, where host signal peptidase cleaves it into pE2, 6K and E1 proteins. pE2 is further processed to mature E3 and E2 by host furin in trans-Golgi vesicle. Phosphorylated on serine and threonine residues. Post-translationally, palmitoylated via thioester bonds. These palmitoylations may induce disruption of the C-terminus transmembrane. This would result in the reorientation of E2 C-terminus from lumenal to cytoplasmic side. In terms of processing, N-glycosylated. Palmitoylated via thioester bonds.

It is found in the virion. The protein resides in the host cytoplasm. The protein localises to the host cell membrane. It localises to the host nucleus. Its subcellular location is the virion membrane. It is found in the host Golgi apparatus. The protein resides in the host trans-Golgi network. The protein localises to the host endoplasmic reticulum. The enzyme catalyses Autocatalytic release of the core protein from the N-terminus of the togavirus structural polyprotein by hydrolysis of a -Trp-|-Ser- bond.. Functionally, forms an icosahedral capsid with a T=4 symmetry composed of 240 copies of the capsid protein surrounded by a lipid membrane through which penetrate 80 spikes composed of trimers of E1-E2 heterodimers. The capsid protein binds to the viral RNA genome at a site adjacent to a ribosome binding site for viral genome translation following genome release. Possesses a protease activity that results in its autocatalytic cleavage from the nascent structural protein. Following its self-cleavage, the capsid protein transiently associates with ribosomes, and within several minutes the protein binds to viral RNA and rapidly assembles into icosahedric core particles. The resulting nucleocapsid eventually associates with the cytoplasmic domain of the spike glycoprotein E2 at the cell membrane, leading to budding and formation of mature virions. In case of infection, new virions attach to target cells and after clathrin-mediated endocytosis their membrane fuses with the host endosomal membrane. This leads to the release of the nucleocapsid into the cytoplasm, followed by an uncoating event necessary for the genomic RNA to become accessible. The uncoating might be triggered by the interaction of capsid proteins with ribosomes. Binding of ribosomes would release the genomic RNA since the same region is genomic RNA-binding and ribosome-binding. Specifically inhibits interleukin-1 receptor-associated kinase 1/IRAK1-dependent signaling during viral entry, representing a means by which the alphaviruses may evade innate immune detection and activation prior to viral gene expression. Inhibits host transcription. Forms a tetrameric complex with XPO1/CRM1 and the nuclear import receptor importin. This complex blocks the central channel of host nuclear pores thereby inhibiting the receptor-mediated nuclear transport and thus the host mRNA and rRNA transcription. The inhibition of transcription is linked to a cytopathic effect on the host cell. In terms of biological role, provides the signal sequence for the translocation of the precursor of protein E3/E2 to the host endoplasmic reticulum. Furin-cleaved E3 remains associated with spike glycoprotein E1 and mediates pH protection of the latter during the transport via the secretory pathway. After virion release from the host cell, the assembly protein E3 is gradually released in the extracellular space. Plays an essential role in viral attachment to target host cell, by binding to the cell receptor PCDH10. Some specific strains may also bind host receptors VLDLR and LRP8/APOER2. Synthesized as a pE2 precursor which is processed by furin at the cell membrane just before virion budding, giving rise to E2-E1 heterodimer. The pE2-E1 heterodimer is stable, whereas E2-E1 is unstable and dissociate at low pH. pE2 is processed at the last step, presumably to avoid E1 fusion activation before its final export to cell surface. E2 C-terminus contains a transitory transmembrane that would be disrupted by palmitoylation, resulting in reorientation of the C-terminal tail from lumenal to cytoplasmic side. This step is critical since E2 C-terminus is involved in budding by interacting with capsid proteins. This release of E2 C-terminus in cytoplasm occurs lately in protein export, and precludes premature assembly of particles at the endoplasmic reticulum membrane. Its function is as follows. Protein 6K: Acts as a viroporin that participates in virus glycoprotein processing and transport to the plasma membrane, cell permeabilization and budding of viral particles. Disrupts the calcium homeostasis of the cell, probably at the endoplasmic reticulum level resulting in the increased levels of cytoplasmic calcium. Because of its lipophilic properties, the 6K protein is postulated to influence the selection of lipids that interact with the transmembrane domains of the glycoproteins, which, in turn, affects the deformability of the bilayer required for the extreme curvature that occurs as budding proceeds. Present in low amount in virions, about 3% compared to viral glycoproteins. Functionally, class II viral fusion protein. Fusion activity is inactive as long as E1 is bound to E2 in mature virion. After virus attachment to target cell receptor PCDH10 and endocytosis, acidification of the endosome induce dissociation of E1/E2 heterodimer and concomitant trimerization of the E1 subunits. This E1 trimer is fusion active, and promotes release of viral nucleocapsid in cytoplasm after endosome and viral membrane fusion. Efficient fusion requires the presence of cholesterol and sphingolipid in the target membrane. The polypeptide is Structural polyprotein (Western equine encephalitis virus (WEEV)).